The primary structure comprises 377 residues: DNA primase small subunit PriS (377 aa).

Catalysis depends on residues D99, D101, and D274.

Belongs to the eukaryotic-type primase small subunit family. As to quaternary structure, heterodimer of a small subunit (PriS) and a large subunit (PriL). Mg(2+) serves as cofactor. Mn(2+) is required as a cofactor.

Its function is as follows. Catalytic subunit of DNA primase, an RNA polymerase that catalyzes the synthesis of short RNA molecules used as primers for DNA polymerase during DNA replication. The small subunit contains the primase catalytic core and has DNA synthesis activity on its own. Binding to the large subunit stabilizes and modulates the activity, increasing the rate of DNA synthesis while decreasing the length of the DNA fragments, and conferring RNA synthesis capability. The DNA polymerase activity may enable DNA primase to also catalyze primer extension after primer synthesis. May also play a role in DNA repair. In Staphylothermus marinus (strain ATCC 43588 / DSM 3639 / JCM 9404 / F1), this protein is DNA primase small subunit PriS.